The sequence spans 135 residues: T-cell receptor gamma chain V region 5/10-13 (135 aa).

An N-terminal signal peptide occupies residues 1 to 18 (MLLLRWPTFCCLWVFGLG). Residues 19 to 114 (QLEQTELSVT…DEATYYCAVC (96 aa)) form a v segment region. Residues 115 to 135 (RSGTSWVKIFAKGTKLVVIPP) form a j segment region.

The chain is T-cell receptor gamma chain V region 5/10-13 (Tcrg-V1) from Mus musculus (Mouse).